We begin with the raw amino-acid sequence, 267 residues long: 4-hydroxy-tetrahydrodipicolinate reductase (267 aa).

Residues 8 to 13 (GAAGRM) and glutamate 34 each bind NAD(+). Residue arginine 35 coordinates NADP(+). NAD(+) contacts are provided by residues 98–100 (GST) and 122–125 (APNM). Histidine 155 acts as the Proton donor/acceptor in catalysis. Histidine 156 contributes to the (S)-2,3,4,5-tetrahydrodipicolinate binding site. Lysine 159 serves as the catalytic Proton donor. 165 to 166 (GT) lines the (S)-2,3,4,5-tetrahydrodipicolinate pocket.

This sequence belongs to the DapB family.

Its subcellular location is the cytoplasm. It carries out the reaction (S)-2,3,4,5-tetrahydrodipicolinate + NAD(+) + H2O = (2S,4S)-4-hydroxy-2,3,4,5-tetrahydrodipicolinate + NADH + H(+). The enzyme catalyses (S)-2,3,4,5-tetrahydrodipicolinate + NADP(+) + H2O = (2S,4S)-4-hydroxy-2,3,4,5-tetrahydrodipicolinate + NADPH + H(+). Its pathway is amino-acid biosynthesis; L-lysine biosynthesis via DAP pathway; (S)-tetrahydrodipicolinate from L-aspartate: step 4/4. In terms of biological role, catalyzes the conversion of 4-hydroxy-tetrahydrodipicolinate (HTPA) to tetrahydrodipicolinate. This chain is 4-hydroxy-tetrahydrodipicolinate reductase, found in Geotalea daltonii (strain DSM 22248 / JCM 15807 / FRC-32) (Geobacter daltonii).